A 421-amino-acid chain; its full sequence is MKLLVVGSGGREHAIAKKLLASKGVDQVFVAPGNDGMTLDGLDLVNIVVSEHSRLIAFAKENEISWAFIGPDDALAAGIVDDFNTAGLRAFGPTKAAAELEWSKDFAKEIMVKYNVPTAAYGTFSDFEKAKAYIEEQGAPIVVKADGLALGKGVVVAETVEQAVEAAQEMLLDNKFGDSGARVVIEEFLDGEEFSLFAFVNGDKFYIMPTAQDHKRAFDGDKGPNTGGMGAYAPVPHLPQSVVDTAVEMIVRPVLEGMVAEGRPYLGVLYVGLILTADGPKVIEFNSRFGDPETQIILPRLTSDFAQNIDDIMMGIEPYITWQKDGVTLGVVVASEGYPFDYEKGVPLPEKTDGDIITYYAGVKFSENSELLLSNGGRVYMLVTTEDSVKAGQDKIYTQLAQQDPTGLFYRNDIGSKAIRE.

The ATP-grasp domain occupies 108–314 (KEIMVKYNVP…FAQNIDDIMM (207 aa)). Position 134–195 (134–195 (IEEQGAPIVV…EEFLDGEEFS (62 aa))) interacts with ATP. Positions 284 and 286 each coordinate Mg(2+).

Belongs to the GARS family. It depends on Mg(2+) as a cofactor. Mn(2+) is required as a cofactor.

The catalysed reaction is 5-phospho-beta-D-ribosylamine + glycine + ATP = N(1)-(5-phospho-beta-D-ribosyl)glycinamide + ADP + phosphate + H(+). It participates in purine metabolism; IMP biosynthesis via de novo pathway; N(1)-(5-phospho-D-ribosyl)glycinamide from 5-phospho-alpha-D-ribose 1-diphosphate: step 2/2. The protein is Phosphoribosylamine--glycine ligase of Streptococcus pyogenes serotype M3 (strain SSI-1).